The chain runs to 365 residues: UDP-N-acetylglucosamine--N-acetylmuramyl-(pentapeptide) pyrophosphoryl-undecaprenol N-acetylglucosamine transferase (365 aa).

Residues 17 to 19, Asn129, Arg167, Ser194, Ile250, 269 to 274, and Gln295 contribute to the UDP-N-acetyl-alpha-D-glucosamine site; these read TGG and ALTVSE.

It belongs to the glycosyltransferase 28 family. MurG subfamily.

It localises to the cell inner membrane. It catalyses the reaction di-trans,octa-cis-undecaprenyl diphospho-N-acetyl-alpha-D-muramoyl-L-alanyl-D-glutamyl-meso-2,6-diaminopimeloyl-D-alanyl-D-alanine + UDP-N-acetyl-alpha-D-glucosamine = di-trans,octa-cis-undecaprenyl diphospho-[N-acetyl-alpha-D-glucosaminyl-(1-&gt;4)]-N-acetyl-alpha-D-muramoyl-L-alanyl-D-glutamyl-meso-2,6-diaminopimeloyl-D-alanyl-D-alanine + UDP + H(+). It functions in the pathway cell wall biogenesis; peptidoglycan biosynthesis. Functionally, cell wall formation. Catalyzes the transfer of a GlcNAc subunit on undecaprenyl-pyrophosphoryl-MurNAc-pentapeptide (lipid intermediate I) to form undecaprenyl-pyrophosphoryl-MurNAc-(pentapeptide)GlcNAc (lipid intermediate II). The protein is UDP-N-acetylglucosamine--N-acetylmuramyl-(pentapeptide) pyrophosphoryl-undecaprenol N-acetylglucosamine transferase of Shewanella sediminis (strain HAW-EB3).